The chain runs to 402 residues: Zinc finger CCCH domain-containing protein 35 (402 aa).

2 consecutive C3H1-type zinc fingers follow at residues C117–F144 and R152–D176. Disordered stretches follow at residues V180 to Y211 and S232 to G258. The segment covering P183–P192 has biased composition (polar residues). Positions S232–P241 are enriched in low complexity. Pro residues predominate over residues P242–S253.

In Oryza sativa subsp. japonica (Rice), this protein is Zinc finger CCCH domain-containing protein 35.